Reading from the N-terminus, the 411-residue chain is POU domain, class 4, transcription factor 2 (411 aa).

Positions Leu29–Pro95 are disordered. Residues Ser31–Asn52 are compositionally biased toward low complexity. 2 stretches are compositionally biased toward gly residues: residues Ala53 to Arg68 and Gly76 to Ser86. The interval Cys93–His239 is required for transcriptional activation. Residues Arg112 to Ile121 carry the POU-IV box motif. Over residues Ser154–Ala168 the composition is skewed to low complexity. The disordered stretch occupies residues Ser154–Leu190. A compositionally biased stretch (basic residues) spans Thr172–Pro186. The Nuclear speckle targeting signal motif lies at His173–His187. The tract at residues Ala240–Ile411 is required for DNA-binding and transcriptional repression. The region spanning Asp252 to Glu329 is the POU-specific domain. The segment at residues Lys347 to Lys406 is a DNA-binding region (homeobox).

It belongs to the POU transcription factor family. Class-4 subfamily. Isoform 2: Interacts with POU4F1 isoform 1; this interaction inhibits both POU4F1 DNA-binding and transcriptional activities. Isoform 2: Interacts (C-terminus) with ESR1 (via DNA-binding domain); this interaction increases the estrogen receptor ESR1 transcriptional activity in a DNA- and ligand 17-beta-estradiol-independent manner. Isoform 2: Interacts (via C-terminus) with TP53 (via N-terminus). Interacts with DLX1 (via homeobox DNA-binding domain); this interaction suppresses DLX1-mediated transcriptional activity in postnatal retina enhancing retinal ganglion cell (RGC) differentiation. Interacts with DLX2 (via homeobox DNA-binding domain); this interaction enhances RGC differentiation. Isoform 1: Interacts (via C-terminus) with ISL1 (via C-terminus). Isoform 1: Interacts with ISL2. Isoform 1: Interacts with LHX2. Expressed in retinal ganglion cells (RGCs). Expressed in mature osteoclasts. Expressed in cells of layers of the superior colliculus and the adjacent periaqueductal gray (at protein level). Expressed in the brain, peripheral sensory nervous system and retina. Expressed in the optical, intermediate, and deep gray areas of the superior colliculus, the dorsal column of the mesencephalic and pontine central gray, and the lateral interpeduncular nucleus of the brain. Expressed predominantly in postmitotic, terminally differentiated neurons. Expressed in ganglion cell layer (GCL) of the retina.

Its subcellular location is the nucleus. The protein resides in the nucleus speckle. It is found in the cytoplasm. In terms of biological role, tissue-specific DNA-binding transcription factor involved in the development and differentiation of target cells. Functions either as activator or repressor by modulating the rate of target gene transcription through RNA polymerase II enzyme in a promoter-dependent manner. Binds to the consensus octamer motif 5'-AT[A/T]A[T/A]T[A/T]A-3' of promoter of target genes. Plays a fundamental role in the gene regulatory network essential for retinal ganglion cell (RGC) differentiation. Binds to an octamer site to form a ternary complex with ISL1; cooperates positively with ISL1 and ISL2 to potentiate transcriptional activation of RGC target genes being involved in RGC fate commitment in the developing retina and RGC axon formation and pathfinding. Inhibits DLX1 and DLX2 transcriptional activities preventing DLX1- and DLX2-mediated ability to promote amacrine cell fate specification. In cooperation with TP53 potentiates transcriptional activation of BAX promoter activity increasing neuronal cell apoptosis. Negatively regulates BAX promoter activity in the absence of TP53. Acts as a transcriptional coactivator via its interaction with the transcription factor ESR1 by enhancing its effect on estrogen response element (ERE)-containing promoter. Antagonizes the transcriptional stimulatory activity of POU4F1 by preventing its binding to an octamer motif. Involved in TNFSF11-mediated terminal osteoclast differentiation. This is POU domain, class 4, transcription factor 2 from Mus musculus (Mouse).